A 382-amino-acid polypeptide reads, in one-letter code: Galactokinase (382 aa).

34-37 is a binding site for substrate; sequence EHTD. 124–130 contributes to the ATP binding site; the sequence is GAGLSSS. Mg(2+) contacts are provided by S130 and E162. D174 acts as the Proton acceptor in catalysis. Y223 provides a ligand contact to substrate.

The protein belongs to the GHMP kinase family. GalK subfamily.

Its subcellular location is the cytoplasm. The enzyme catalyses alpha-D-galactose + ATP = alpha-D-galactose 1-phosphate + ADP + H(+). It participates in carbohydrate metabolism; galactose metabolism. Its function is as follows. Catalyzes the transfer of the gamma-phosphate of ATP to D-galactose to form alpha-D-galactose-1-phosphate (Gal-1-P). This Escherichia fergusonii (strain ATCC 35469 / DSM 13698 / CCUG 18766 / IAM 14443 / JCM 21226 / LMG 7866 / NBRC 102419 / NCTC 12128 / CDC 0568-73) protein is Galactokinase.